Reading from the N-terminus, the 241-residue chain is Octanoyltransferase (241 aa).

Positions 43 to 228 constitute a BPL/LPL catalytic domain; it reads AETPDEIWLV…CLTANLDGSP (186 aa). Substrate contacts are provided by residues 83–90, 159–161, and 172–174; these read RGGQITYH, ALG, and GVS. The active-site Acyl-thioester intermediate is the Cys190.

Belongs to the LipB family.

Its subcellular location is the cytoplasm. It catalyses the reaction octanoyl-[ACP] + L-lysyl-[protein] = N(6)-octanoyl-L-lysyl-[protein] + holo-[ACP] + H(+). The protein operates within protein modification; protein lipoylation via endogenous pathway; protein N(6)-(lipoyl)lysine from octanoyl-[acyl-carrier-protein]: step 1/2. Its function is as follows. Catalyzes the transfer of endogenously produced octanoic acid from octanoyl-acyl-carrier-protein onto the lipoyl domains of lipoate-dependent enzymes. Lipoyl-ACP can also act as a substrate although octanoyl-ACP is likely to be the physiological substrate. This is Octanoyltransferase from Paraburkholderia xenovorans (strain LB400).